The primary structure comprises 220 residues: UPF0502 protein PSPPH_2577 (220 aa).

It belongs to the UPF0502 family.

The polypeptide is UPF0502 protein PSPPH_2577 (Pseudomonas savastanoi pv. phaseolicola (strain 1448A / Race 6) (Pseudomonas syringae pv. phaseolicola (strain 1448A / Race 6))).